The sequence spans 331 residues: Tyrosine recombinase XerD (331 aa).

The 86-residue stretch at 8-93 folds into the Core-binding (CB) domain; that stretch reads GRDGARLESF…SMRQFYRFLY (86 aa). Residues 114–318 form the Tyr recombinase domain; sequence ALPKTMSVAD…LEERLQELVQ (205 aa). Catalysis depends on residues Arg-161 and Lys-185. Over residues 214–228 the composition is skewed to basic and acidic residues; it reads QEKSKAAASQKKTDT. The segment at 214–239 is disordered; the sequence is QEKSKAAASQKKTDTAESPWLFPSNS. Catalysis depends on residues His-270, Arg-273, and His-296. Catalysis depends on Tyr-305, which acts as the O-(3'-phospho-DNA)-tyrosine intermediate.

Belongs to the 'phage' integrase family. XerD subfamily. As to quaternary structure, forms a cyclic heterotetrameric complex composed of two molecules of XerC and two molecules of XerD.

It localises to the cytoplasm. In terms of biological role, site-specific tyrosine recombinase, which acts by catalyzing the cutting and rejoining of the recombining DNA molecules. The XerC-XerD complex is essential to convert dimers of the bacterial chromosome into monomers to permit their segregation at cell division. It also contributes to the segregational stability of plasmids. The sequence is that of Tyrosine recombinase XerD from Agrobacterium fabrum (strain C58 / ATCC 33970) (Agrobacterium tumefaciens (strain C58)).